Consider the following 521-residue polypeptide: Peroxisomal membrane protein PEX23 (521 aa).

The disordered stretch occupies residues 1 to 26 (MPTDPNSNPVSKAGLTPSSINSNISE). N-linked (GlcNAc...) asparagine glycosylation is found at Asn-23 and Asn-53. Transmembrane regions (helical) follow at residues 111-128 (SYIS…ILYF) and 133-150 (IYLG…YSIF). N-linked (GlcNAc...) asparagine glycosylation is present at Asn-189. The chain crosses the membrane as a helical span at residues 198–217 (LLFTSIFLSPGYILVCYLLF). An N-linked (GlcNAc...) asparagine glycan is attached at Asn-279. The tract at residues 425–446 (VSPGDDSSTDSASLPHSASETV) is disordered. The span at 429-446 (DDSSTDSASLPHSASETV) shows a compositional bias: polar residues. Residues Asn-463 and Asn-467 are each glycosylated (N-linked (GlcNAc...) asparagine). The tract at residues 465–486 (SGNITTSAETAPDSAGTAKKRK) is disordered.

It belongs to the PEX28-32 family. PEX32 subfamily.

Its subcellular location is the endoplasmic reticulum membrane. Functionally, with PEX29, contributes to the formation of endoplasmic reticulum-mitochondria junctions which are important for mitochondrial function. Involved in lipid dropplets formation. The chain is Peroxisomal membrane protein PEX23 from Ogataea parapolymorpha (strain ATCC 26012 / BCRC 20466 / JCM 22074 / NRRL Y-7560 / DL-1) (Yeast).